We begin with the raw amino-acid sequence, 224 residues long: Ribonuclease 3 (224 aa).

Residues 4-126 form the RNase III domain; sequence LDRLQRQISY…IIGAISLDSS (123 aa). Position 39 (E39) interacts with Mg(2+). D43 is a catalytic residue. The Mg(2+) site is built by D112 and E115. Residue E115 is part of the active site. The DRBM domain maps to 153–223; sequence DPKTRLQEYL…AEQILTALEI (71 aa).

Belongs to the ribonuclease III family. Homodimer. Requires Mg(2+) as cofactor.

The protein resides in the cytoplasm. The enzyme catalyses Endonucleolytic cleavage to 5'-phosphomonoester.. In terms of biological role, digests double-stranded RNA. Involved in the processing of primary rRNA transcript to yield the immediate precursors to the large and small rRNAs (23S and 16S). Processes some mRNAs, and tRNAs when they are encoded in the rRNA operon. Processes pre-crRNA and tracrRNA of type II CRISPR loci if present in the organism. The protein is Ribonuclease 3 of Mannheimia succiniciproducens (strain KCTC 0769BP / MBEL55E).